The sequence spans 62 residues: UPF0434 protein azo1471 (62 aa).

This sequence belongs to the UPF0434 family.

The chain is UPF0434 protein azo1471 from Azoarcus sp. (strain BH72).